The following is a 689-amino-acid chain: DNA ligase (689 aa).

NAD(+) contacts are provided by residues 40–44, 89–90, and E121; these read DSEYD and SL. Catalysis depends on K123, which acts as the N6-AMP-lysine intermediate. R144, E179, K295, and K319 together coordinate NAD(+). 4 residues coordinate Zn(2+): C413, C416, C431, and C437. The region spanning 610-689 is the BRCT domain; sequence REQNILTGKI…VEWLAFIKNA (80 aa).

The protein belongs to the NAD-dependent DNA ligase family. LigA subfamily. The cofactor is Mg(2+). It depends on Mn(2+) as a cofactor.

The enzyme catalyses NAD(+) + (deoxyribonucleotide)n-3'-hydroxyl + 5'-phospho-(deoxyribonucleotide)m = (deoxyribonucleotide)n+m + AMP + beta-nicotinamide D-nucleotide.. In terms of biological role, DNA ligase that catalyzes the formation of phosphodiester linkages between 5'-phosphoryl and 3'-hydroxyl groups in double-stranded DNA using NAD as a coenzyme and as the energy source for the reaction. It is essential for DNA replication and repair of damaged DNA. This Rickettsia prowazekii (strain Madrid E) protein is DNA ligase.